Reading from the N-terminus, the 349-residue chain is Isopentenyl-diphosphate delta-isomerase (349 aa).

Substrate is bound at residue 5–6 (RK). FMN-binding positions include Ser62, 63 to 65 (AIT), Ser93, and Asn122. 93–95 (SQR) is a substrate binding site. Substrate is bound at residue Gln151. Mg(2+) is bound at residue Glu152. Residues Lys183, Thr213, 259–261 (GIR), and 280–281 (AL) contribute to the FMN site.

Belongs to the IPP isomerase type 2 family. As to quaternary structure, homooctamer. Dimer of tetramers. It depends on FMN as a cofactor. The cofactor is NADPH. Requires Mg(2+) as cofactor.

Its subcellular location is the cytoplasm. It catalyses the reaction isopentenyl diphosphate = dimethylallyl diphosphate. Involved in the biosynthesis of isoprenoids. Catalyzes the 1,3-allylic rearrangement of the homoallylic substrate isopentenyl (IPP) to its allylic isomer, dimethylallyl diphosphate (DMAPP). This Methanothermobacter thermautotrophicus (strain ATCC 29096 / DSM 1053 / JCM 10044 / NBRC 100330 / Delta H) (Methanobacterium thermoautotrophicum) protein is Isopentenyl-diphosphate delta-isomerase.